The sequence spans 183 residues: Apo-citrate lyase phosphoribosyl-dephospho-CoA transferase (183 aa).

It belongs to the CitX family.

The enzyme catalyses apo-[citrate lyase ACP] + 2'-(5''-triphospho-alpha-D-ribosyl)-3'-dephospho-CoA = holo-[citrate lyase ACP] + diphosphate. In terms of biological role, transfers 2-(5''-triphosphoribosyl)-3'-dephosphocoenzyme-A on a serine residue to the apo-acyl carrier protein (gamma chain) of the citrate lyase to yield holo-acyl carrier protein. This Citrobacter koseri (strain ATCC BAA-895 / CDC 4225-83 / SGSC4696) protein is Apo-citrate lyase phosphoribosyl-dephospho-CoA transferase.